An 82-amino-acid chain; its full sequence is Putative ribonuclease VapC34 (82 aa).

Asp-4 provides a ligand contact to Mg(2+).

The protein belongs to the PINc/VapC protein family. Mg(2+) serves as cofactor.

Toxic component of a possible type II toxin-antitoxin (TA) system. A putative RNase. Its cognate antitoxin is VapB34. This chain is Putative ribonuclease VapC34 (vapC34), found in Mycobacterium tuberculosis (strain CDC 1551 / Oshkosh).